The sequence spans 286 residues: ATP synthase gamma chain (286 aa).

It belongs to the ATPase gamma chain family. As to quaternary structure, F-type ATPases have 2 components, CF(1) - the catalytic core - and CF(0) - the membrane proton channel. CF(1) has five subunits: alpha(3), beta(3), gamma(1), delta(1), epsilon(1). CF(0) has three main subunits: a, b and c.

The protein localises to the cell inner membrane. Functionally, produces ATP from ADP in the presence of a proton gradient across the membrane. The gamma chain is believed to be important in regulating ATPase activity and the flow of protons through the CF(0) complex. In Pseudomonas putida (strain W619), this protein is ATP synthase gamma chain.